Consider the following 137-residue polypeptide: Ribosomal RNA large subunit methyltransferase H (137 aa).

Residues Leu-56, Gly-85, and 104–109 (LSPLTL) contribute to the S-adenosyl-L-methionine site.

This sequence belongs to the RNA methyltransferase RlmH family. In terms of assembly, homodimer.

It localises to the cytoplasm. It catalyses the reaction pseudouridine(1915) in 23S rRNA + S-adenosyl-L-methionine = N(3)-methylpseudouridine(1915) in 23S rRNA + S-adenosyl-L-homocysteine + H(+). Functionally, specifically methylates the pseudouridine at position 1915 (m3Psi1915) in 23S rRNA. The polypeptide is Ribosomal RNA large subunit methyltransferase H (Thermus thermophilus (strain ATCC 27634 / DSM 579 / HB8)).